Here is a 155-residue protein sequence, read N- to C-terminus: MLHKKYRPNVAAIIMSPNYPNACEVFIAERIDIEGAWQFPQGGIDEGETPLEALYRELLEEIGTNEIEILAQYPRWIAYDFPSNMEHKFYAFDGQKQRYFLVRLKHANNIDLNKHTPEFRAYRFIHLKDLLKKIVPFKRQVYRQVIAYFKREGYL.

In terms of domain architecture, Nudix hydrolase spans lysine 5–alanine 147. A Nudix box motif is present at residues glycine 42–glycine 63.

Belongs to the Nudix hydrolase family. RppH subfamily. It depends on a divalent metal cation as a cofactor.

Accelerates the degradation of transcripts by removing pyrophosphate from the 5'-end of triphosphorylated RNA, leading to a more labile monophosphorylated state that can stimulate subsequent ribonuclease cleavage. This chain is RNA pyrophosphohydrolase, found in Helicobacter pylori (strain P12).